The primary structure comprises 193 residues: Acyl carrier protein phosphodiesterase (193 aa).

Belongs to the AcpH family.

The catalysed reaction is holo-[ACP] + H2O = apo-[ACP] + (R)-4'-phosphopantetheine + H(+). Functionally, converts holo-ACP to apo-ACP by hydrolytic cleavage of the phosphopantetheine prosthetic group from ACP. The sequence is that of Acyl carrier protein phosphodiesterase from Escherichia coli O6:K15:H31 (strain 536 / UPEC).